We begin with the raw amino-acid sequence, 556 residues long: Glucose-6-phosphate isomerase (556 aa).

The active-site Proton donor is glutamate 360. Active-site residues include histidine 391 and lysine 519.

The protein belongs to the GPI family.

The protein localises to the cytoplasm. It catalyses the reaction alpha-D-glucose 6-phosphate = beta-D-fructose 6-phosphate. It functions in the pathway carbohydrate biosynthesis; gluconeogenesis. Its pathway is carbohydrate degradation; glycolysis; D-glyceraldehyde 3-phosphate and glycerone phosphate from D-glucose: step 2/4. Its function is as follows. Catalyzes the reversible isomerization of glucose-6-phosphate to fructose-6-phosphate. The polypeptide is Glucose-6-phosphate isomerase (Acinetobacter baumannii (strain AB0057)).